Consider the following 77-residue polypeptide: NAD(P)H-quinone oxidoreductase subunit L (77 aa).

A run of 2 helical transmembrane segments spans residues 10 to 30 and 48 to 68; these read LLIA…LPAG and LVMY…SPFL.

The protein belongs to the complex I NdhL subunit family. NDH-1 can be composed of about 15 different subunits; different subcomplexes with different compositions have been identified which probably have different functions.

The protein resides in the cellular thylakoid membrane. The catalysed reaction is a plastoquinone + NADH + (n+1) H(+)(in) = a plastoquinol + NAD(+) + n H(+)(out). It catalyses the reaction a plastoquinone + NADPH + (n+1) H(+)(in) = a plastoquinol + NADP(+) + n H(+)(out). NDH-1 shuttles electrons from an unknown electron donor, via FMN and iron-sulfur (Fe-S) centers, to quinones in the respiratory and/or the photosynthetic chain. The immediate electron acceptor for the enzyme in this species is believed to be plastoquinone. Couples the redox reaction to proton translocation, and thus conserves the redox energy in a proton gradient. Cyanobacterial NDH-1 also plays a role in inorganic carbon-concentration. The protein is NAD(P)H-quinone oxidoreductase subunit L of Picosynechococcus sp. (strain ATCC 27264 / PCC 7002 / PR-6) (Agmenellum quadruplicatum).